The sequence spans 361 residues: tRNA/tmRNA (uracil-C(5))-methyltransferase (361 aa).

Q185, Y213, N218, E234, and D294 together coordinate S-adenosyl-L-methionine. Catalysis depends on C319, which acts as the Nucleophile. E353 acts as the Proton acceptor in catalysis.

It belongs to the class I-like SAM-binding methyltransferase superfamily. RNA M5U methyltransferase family. TrmA subfamily.

It carries out the reaction uridine(54) in tRNA + S-adenosyl-L-methionine = 5-methyluridine(54) in tRNA + S-adenosyl-L-homocysteine + H(+). The enzyme catalyses uridine(341) in tmRNA + S-adenosyl-L-methionine = 5-methyluridine(341) in tmRNA + S-adenosyl-L-homocysteine + H(+). Its function is as follows. Dual-specificity methyltransferase that catalyzes the formation of 5-methyluridine at position 54 (m5U54) in all tRNAs, and that of position 341 (m5U341) in tmRNA (transfer-mRNA). This is tRNA/tmRNA (uracil-C(5))-methyltransferase from Azotobacter vinelandii (strain DJ / ATCC BAA-1303).